The sequence spans 163 residues: Inorganic pyrophosphatase (163 aa).

Glu8 provides a ligand contact to Mg(2+). Substrate is bound by residues Lys16, Arg30, and Tyr42. Asp52, Asp57, Asp84, and Asp89 together coordinate Mg(2+). Asp89 acts as the Proton acceptor in catalysis. Tyr126 is a substrate binding site.

It belongs to the PPase family. As to quaternary structure, homohexamer. Requires Mg(2+) as cofactor.

The protein localises to the cytoplasm. It carries out the reaction diphosphate + H2O = 2 phosphate + H(+). Catalyzes the hydrolysis of inorganic pyrophosphate (PPi) forming two phosphate ions. The protein is Inorganic pyrophosphatase of Streptomyces coelicolor (strain ATCC BAA-471 / A3(2) / M145).